A 294-amino-acid polypeptide reads, in one-letter code: Dolichol-phosphate mannosyltransferase (294 aa).

Residues M1 to T27 are disordered. Residues M1 to R263 are Cytoplasmic-facing. Over residues P17–T27 the composition is skewed to low complexity. Residues P35, E39, V70, D72, D123, A124, D125, Q127, R151, K211, R237, and K243 each coordinate GDP-alpha-D-mannose. The Mg(2+) site is built by D125 and Q127. Mn(2+) is bound by residues D125 and Q127. A helical transmembrane segment spans residues F264–W284. The Lumenal portion of the chain corresponds to S285 to A294.

Belongs to the glycosyltransferase 2 family. Mg(2+) is required as a cofactor. It depends on Mn(2+) as a cofactor. Requires Ca(2+) as cofactor.

It localises to the endoplasmic reticulum membrane. The catalysed reaction is a di-trans,poly-cis-dolichyl phosphate + GDP-alpha-D-mannose = a di-trans,poly-cis-dolichyl beta-D-mannosyl phosphate + GDP. The protein operates within protein modification; protein glycosylation. Its function is as follows. Transfers mannose from GDP-mannose to dolichol monophosphate to form dolichol phosphate mannose (Dol-P-Man) which is the mannosyl donor in pathways leading to N-glycosylation, glycosyl phosphatidylinositol membrane anchoring, and O-mannosylation of proteins. This chain is Dolichol-phosphate mannosyltransferase (DPM1), found in Mycosarcoma maydis (Corn smut fungus).